A 475-amino-acid polypeptide reads, in one-letter code: Ribulose bisphosphate carboxylase large chain (475 aa).

Positions 1-2 are excised as a propeptide; the sequence is MS. P3 carries the post-translational modification N-acetylproline. The residue at position 14 (K14) is an N6,N6,N6-trimethyllysine. N123 and T173 together coordinate substrate. K175 serves as the catalytic Proton acceptor. K177 is a binding site for substrate. Mg(2+)-binding residues include K201, D203, and E204. K201 bears the N6-carboxylysine mark. Catalysis depends on H294, which acts as the Proton acceptor. Substrate contacts are provided by R295, H327, and S379.

It belongs to the RuBisCO large chain family. Type I subfamily. As to quaternary structure, heterohexadecamer of 8 large chains and 8 small chains; disulfide-linked. The disulfide link is formed within the large subunit homodimers. Mg(2+) serves as cofactor. Post-translationally, the disulfide bond which can form in the large chain dimeric partners within the hexadecamer appears to be associated with oxidative stress and protein turnover.

It is found in the plastid. The protein resides in the chloroplast. The catalysed reaction is 2 (2R)-3-phosphoglycerate + 2 H(+) = D-ribulose 1,5-bisphosphate + CO2 + H2O. The enzyme catalyses D-ribulose 1,5-bisphosphate + O2 = 2-phosphoglycolate + (2R)-3-phosphoglycerate + 2 H(+). RuBisCO catalyzes two reactions: the carboxylation of D-ribulose 1,5-bisphosphate, the primary event in carbon dioxide fixation, as well as the oxidative fragmentation of the pentose substrate in the photorespiration process. Both reactions occur simultaneously and in competition at the same active site. This chain is Ribulose bisphosphate carboxylase large chain, found in Viscum album (European mistletoe).